The chain runs to 758 residues: Spastin (758 aa).

The segment at methionine 1–tyrosine 103 is disordered. At methionine 1–proline 121 the chain is on the cytoplasmic side. The segment at methionine 1 to cysteine 159 is interaction with atl. Residues methionine 1–alanine 210 form a required for localization to punctate cytoplasmic foci region. Low complexity-rich tracts occupy residues serine 8–alanine 28, arginine 43–serine 58, serine 66–proline 76, and threonine 85–proline 95. The helical intramembrane region spans isoleucine 122–tyrosine 142. Residues leucine 143–isoleucine 758 lie on the Cytoplasmic side of the membrane. 2 stretches are compositionally biased toward polar residues: residues serine 169 to serine 180 and glutamine 189 to glutamine 198. The disordered stretch occupies residues serine 169–proline 202. The segment at methionine 208–isoleucine 758 is sufficient for interaction with microtubules and microtubule severing. Residues histidine 233–leucine 308 form the MIT domain. The disordered stretch occupies residues arginine 353–proline 454. Polar residues-rich tracts occupy residues asparagine 390 to glycine 406 and glutamine 425 to proline 454. Threonine 439 bears the Phosphothreonine mark. The interval asparagine 443 to valine 455 is required for interaction with microtubules. Residue glycine 523–threonine 530 coordinates ATP.

The protein belongs to the AAA ATPase family. Spastin subfamily. In terms of assembly, homohexamer. The homohexamer is stabilized by ATP-binding. The homohexamer may adopt a ring conformation through which microtubules pass prior to being severed. Interacts with microtubules. Interacts with atl; may be involved in microtubule dynamics.

The protein localises to the membrane. The protein resides in the cytoplasm. It localises to the cytoskeleton. It is found in the microtubule organizing center. Its subcellular location is the centrosome. The protein localises to the chromosome. The protein resides in the lipid droplet. The enzyme catalyses n ATP + n H2O + a microtubule = n ADP + n phosphate + (n+1) alpha/beta tubulin heterodimers.. In terms of biological role, ATP-dependent microtubule severing protein. Stimulates microtubule minus-end depolymerization and poleward microtubule flux in the mitotic spindle. Regulates microtubule stability in the neuromuscular junction synapse. Involved in lipid metabolism by regulating the size and distribution of lipid droplets. Involved in axon regeneration by regulating microtubule severing. The chain is Spastin from Drosophila melanogaster (Fruit fly).